A 574-amino-acid chain; its full sequence is Serine hydroxymethyltransferase (574 aa).

(6S)-5,6,7,8-tetrahydrofolate is bound at residue 180–182 (GHL). Residue Lys288 is modified to N6-(pyridoxal phosphate)lysine. Position 306 (Glu306) interacts with (6S)-5,6,7,8-tetrahydrofolate.

Belongs to the SHMT family. As to quaternary structure, homodimer. It depends on pyridoxal 5'-phosphate as a cofactor.

It is found in the cytoplasm. The catalysed reaction is (6R)-5,10-methylene-5,6,7,8-tetrahydrofolate + glycine + H2O = (6S)-5,6,7,8-tetrahydrofolate + L-serine. It functions in the pathway one-carbon metabolism; tetrahydrofolate interconversion. Its pathway is amino-acid biosynthesis; glycine biosynthesis; glycine from L-serine: step 1/1. Functionally, catalyzes the reversible interconversion of serine and glycine with tetrahydrofolate (THF) serving as the one-carbon carrier. This reaction serves as the major source of one-carbon groups required for the biosynthesis of purines, thymidylate, methionine, and other important biomolecules. Also exhibits THF-independent aldolase activity toward beta-hydroxyamino acids, producing glycine and aldehydes, via a retro-aldol mechanism. This chain is Serine hydroxymethyltransferase, found in Treponema pallidum (strain Nichols).